We begin with the raw amino-acid sequence, 131 residues long: Small ribosomal subunit protein uS9 (131 aa).

This sequence belongs to the universal ribosomal protein uS9 family.

The polypeptide is Small ribosomal subunit protein uS9 (Glaesserella parasuis serovar 5 (strain SH0165) (Haemophilus parasuis)).